Here is a 137-residue protein sequence, read N- to C-terminus: Large ribosomal subunit protein uL16 (137 aa).

This sequence belongs to the universal ribosomal protein uL16 family. Part of the 50S ribosomal subunit.

Binds 23S rRNA and is also seen to make contacts with the A and possibly P site tRNAs. The sequence is that of Large ribosomal subunit protein uL16 from Spiroplasma citri.